A 116-amino-acid chain; its full sequence is Large-conductance mechanosensitive channel (116 aa).

Transmembrane regions (helical) follow at residues 7–27 (EFAL…GAAF) and 64–84 (GLFI…FIFV).

This sequence belongs to the MscL family. In terms of assembly, homopentamer.

Its subcellular location is the cell membrane. In terms of biological role, channel that opens in response to stretch forces in the membrane lipid bilayer. May participate in the regulation of osmotic pressure changes within the cell. The chain is Large-conductance mechanosensitive channel from Staphylococcus epidermidis (strain ATCC 35984 / DSM 28319 / BCRC 17069 / CCUG 31568 / BM 3577 / RP62A).